The primary structure comprises 2382 residues: Highly reducing polyketide synthase srdA (2382 aa).

Residues 1–25 (MAPHSTLDSDYSSGSSTPTSASAAG) form a disordered region. One can recognise a Ketosynthase family 3 (KS3) domain in the interval 44 to 474 (QEPIAIIGMG…GANAHAILEA (431 aa)). Active-site for beta-ketoacyl synthase activity residues include Cys-217, His-352, and His-390. The interval 580–891 (VFTGQGAQWP…HYGSALSRGK (312 aa)) is malonyl-CoA:ACP transacylase (MAT) domain. Ser-672 acts as the For malonyltransferase activity in catalysis. Residues 971-1108 (HDLLGSQVHG…GLVKIDSAPA (138 aa)) are N-terminal hotdog fold. Residues 971-1274 (HDLLGSQVHG…RQVSYQSGIQ (304 aa)) are dehydratase (DH) domain. Positions 971-1275 (HDLLGSQVHG…QVSYQSGIQQ (305 aa)) constitute a PKS/mFAS DH domain. His-1003 acts as the Proton acceptor; for dehydratase activity in catalysis. A C-terminal hotdog fold region spans residues 1121-1275 (MEPQAPRTWY…QVSYQSGIQQ (155 aa)). Residue Asp-1189 is the Proton donor; for dehydratase activity of the active site. An enoyl reductase (ER) domain region spans residues 1668 to 1979 (GQIDSIFFRR…AKGHSGSVVV (312 aa)). Positions 2004–2180 (SYLLVGCLGG…ATSIGLGMIS (177 aa)) are ketoreductase (KR) domain. Positions 2298 to 2376 (SVEDAVLKMI…LLSELITKKM (79 aa)) constitute a Carrier domain. At Ser-2335 the chain carries O-(pantetheine 4'-phosphoryl)serine.

In terms of biological role, highly reducing polyketide synthase; part of the gene cluster that mediates the biosynthesis of sordarial, a salicylic aldehyde structurally related to the phytotoxin pyriculol. The most interesting aspect of this pathway is formation of an aromatic product from the highly reducing polyketide synthase srdA. SrdA synthesizes a reduced polyketide chain from one molecule of acetyl-CoA and five molecules of malonyl-CoA. The polyketide chain is then reductively released as an aldehyde. The oxidoreductases srdC, srdD and srdE then oxidize one of the hydroxy groups to facilitate the intramolecular aldol condensation, followed by dehydration to yield a salicylic aldehyde. This aldehyde can undergo facile reduction by endogenous reductases to yield the alcohol 1-hydroxy-2-hydroxymethyl-3-pent-1,3-dienylbenzene. The flavin-dependent srdI counteract against the propensity of the aldehydes to be reduced under physiological conditions and is responsible for reoxidizing 1-hydroxy-2-hydroxymethyl-3-pent-1,3-dienylbenzene back to the salicylic aldehyde. This salicylic aldehyde is then selectively epoxidized by the cupin-domain-containing oxidoreductase srdB to yield the epoxide, which can be hydrolyzed stereoselectively by the hydrolase srdG to give the final product sordarial. The protein is Highly reducing polyketide synthase srdA of Neurospora crassa (strain ATCC 24698 / 74-OR23-1A / CBS 708.71 / DSM 1257 / FGSC 987).